The sequence spans 271 residues: Glutamate 5-kinase (271 aa).

An ATP-binding site is contributed by Lys14. 3 residues coordinate substrate: Ser54, Asp141, and Asn157. ATP contacts are provided by residues 177-178 (SD) and 219-225 (TGGMSSK).

The protein belongs to the glutamate 5-kinase family.

It localises to the cytoplasm. The enzyme catalyses L-glutamate + ATP = L-glutamyl 5-phosphate + ADP. The protein operates within amino-acid biosynthesis; L-proline biosynthesis; L-glutamate 5-semialdehyde from L-glutamate: step 1/2. Functionally, catalyzes the transfer of a phosphate group to glutamate to form L-glutamate 5-phosphate. The chain is Glutamate 5-kinase from Enterococcus faecalis (strain ATCC 700802 / V583).